Here is a 432-residue protein sequence, read N- to C-terminus: Protein RETICULATA, chloroplastic (432 aa).

Residues 1–47 constitute a chloroplast transit peptide; the sequence is MAGCAMNLQFSSVVKVRNEISSFGICNRDFVFRDLAKAMKVPVLRIR. Residues 109–140 are disordered; that stretch reads GNVGDGFNGSDGNGGGGGGGNGGEGDGEGEDY. Residues 111–132 show a composition bias toward gly residues; the sequence is VGDGFNGSDGNGGGGGGGNGGE. The next 2 helical transmembrane spans lie at 249–269 and 322–342; these read LYVADLLVGTVVNIALVGMLA and IMYGAVGFGCGIVGQGIANLI.

This sequence belongs to the RETICULATA family. Highly expressed in the vasculature of developing leaf primordia, margins of fully expanded leaves, hydathodes of rosette of cauline leaves, basal region of the lamina, stipules, root tips, stamens and in the abscission zone of the funiculus.

The protein localises to the plastid. Its subcellular location is the chloroplast membrane. In terms of biological role, may play a role in leaf development. Required for leaf mesophyll cell division in the early stages of leaf organogenesis. Acts in a developmental pathway that involves PPT1/CUE1 but does not include ASE2/DOV1. The sequence is that of Protein RETICULATA, chloroplastic from Arabidopsis thaliana (Mouse-ear cress).